Consider the following 101-residue polypeptide: MAVVSAPAKPGTTWQRESAPVDVTDRAWVTIVWDDPVNLMSYVTYVFQKLFGYSEPHATKLMLQVHNEGKAVVSAGSRESMEVDVSKLHAAGLWATMQQDR.

This sequence belongs to the ClpS family. As to quaternary structure, binds to the N-terminal domain of the chaperone ClpA.

Involved in the modulation of the specificity of the ClpAP-mediated ATP-dependent protein degradation. The polypeptide is ATP-dependent Clp protease adapter protein ClpS (Mycobacterium bovis (strain ATCC BAA-935 / AF2122/97)).